The chain runs to 202 residues: Coiled-coil domain-containing protein 85B (202 aa).

The residue at position 1 (Met-1) is an N-acetylmethionine. Coiled coils occupy residues 44 to 82 (RLMQ…DLCC) and 118 to 141 (QKLA…KELC). A compositionally biased stretch (gly residues) spans 152–162 (GGPGGAVGSGA). Residues 152–202 (GGPGGAVGSGAGPTPELALPPCGPRDLGDGSSSTGSVGSPDQLPLACSPDD) are disordered. Low complexity predominate over residues 180-190 (DGSSSTGSVGS).

The protein belongs to the CCDC85 family. Interacts with CEBPB. May interact with CEBPD. Interacts with EURL. Interacts with MCRS1. Interacts with TCF7L2; competes with CTNNB1. Interacts with ANKRD26. Interacts with the beta-catenin family proteins ARVCF, CTNND1, CTNND2 and PKP4. In terms of tissue distribution, expressed in white and brown adipose tissue.

It localises to the nucleus. The protein localises to the cytoplasm. Its subcellular location is the cytoskeleton. It is found in the microtubule organizing center. The protein resides in the centrosome. It localises to the cell junction. The protein localises to the adherens junction. In terms of biological role, functions as a transcriptional repressor. May inhibit the activity of CTNNB1 in a TP53-dependent manner and thus regulate cell growth. May function in adipocyte differentiation, negatively regulating mitotic clonal expansion. Plays a role in cell-cell adhesion and epithelium development through its interaction with proteins of the beta-catenin family. The polypeptide is Coiled-coil domain-containing protein 85B (Ccdc85b) (Mus musculus (Mouse)).